Here is a 353-residue protein sequence, read N- to C-terminus: Major outer membrane protein (353 aa).

The signal sequence occupies residues 1–20 (MKKTIVALAVAAVAATSANA).

Disulfide bond interactions within and between MOMP molecules and other components form high molecular-weight oligomers.

It localises to the cell outer membrane. Its function is as follows. Structural rigidity of the outer membrane of elementary bodies and porin forming, permitting diffusion of solutes through the intracellular reticulate body membrane. This is Major outer membrane protein (ompH) from Pasteurella multocida.